Reading from the N-terminus, the 461-residue chain is MSRINKNVVLALLTLTSSAFLLFQLYYYKHYLSTRNGAGLSKSKGSRIGFDSTQWRAVKKFIMLTSNQNVPVFLIDPLILELINKNFEQVKNTSQGSISQCTFFCVPRDFTAFALQYHLWKNEEGWFRIAENMGFQCLKIESKDPRLDGIDSLSGTEIPLHYICKLAAHAIHLVVFHERSSNYLWHGHLRLKEHIDRKFVPFRKLQFGRYPGAFDRPELQQVTVDGLEVLIPKDPMHFVEEVPHSRFIECRYKEARAFFQQYLDDNTVEAMAFRKSAKELLQLAAKTLNKLGVPFWLSSGTCLGWYRQCNIIPYSKDVDLGIFIQDYKSDIILAFQDAGLPLKHKFGKVEDSLELSFQGKDDVKLDIFFFYEETDHMWNGGTQAKTGKKFKYLFPKFTLCWTEFVDMKVHVPCETLEYIEANYGKTWKIPVKTWDWKRSPPNVQPNGIWPISEWDEVIQLY.

Over 1-7 the chain is Cytoplasmic; it reads MSRINKN. Positions 6-27 are required and sufficient for interaction with POMGNT1; the sequence is KNVVLALLTLTSSAFLLFQLYY. A helical; Signal-anchor for type II membrane protein transmembrane segment spans residues 8-28; that stretch reads VVLALLTLTSSAFLLFQLYYY. Residues 29–461 lie on the Lumenal side of the membrane; that stretch reads KHYLSTRNGA…SEWDEVIQLY (433 aa). Residue N92 is glycosylated (N-linked (GlcNAc...) asparagine).

It belongs to the LicD transferase family. Forms a complex composed of FKTN/fukutin, FKRP and RXYLT1/TMEM5. Interacts (via transmembrane domain) with POMGNT1; the interaction is direct and is required for normal POMGNT1 location in Golgi membranes. As to expression, expressed in the retina (at protein level).

Its subcellular location is the golgi apparatus membrane. It localises to the cytoplasm. It is found in the nucleus. It carries out the reaction 3-O-[beta-D-GalNAc-(1-&gt;3)-beta-D-GlcNAc-(1-&gt;4)-(O-6-P-alpha-D-Man)]-Thr-[protein] + CDP-L-ribitol = 3-O-[Rib-ol-P-3-beta-D-GalNAc-(1-&gt;3)-beta-D-GlcNAc-(1-&gt;4)-(O-6-P-alpha-D-Man)]-Thr-[protein] + CMP + H(+). The protein operates within protein modification; protein glycosylation. Catalyzes the transfer of CDP-ribitol to the distal N-acetylgalactosamine of the phosphorylated O-mannosyl trisaccharide (N-acetylgalactosamine-beta-3-N-acetylglucosamine-beta-4-(phosphate-6-)mannose), a carbohydrate structure present in alpha-dystroglycan (DAG1). This constitutes the first step in the formation of the ribitol 5-phosphate tandem repeat which links the phosphorylated O-mannosyl trisaccharide to the ligand binding moiety composed of repeats of 3-xylosyl-alpha-1,3-glucuronic acid-beta-1. May interact with and reinforce a large complex encompassing the outside and inside of muscle membranes. Could be involved in brain development. This chain is Ribitol-5-phosphate transferase FKTN, found in Macaca fascicularis (Crab-eating macaque).